The sequence spans 611 residues: Urease subunit alpha 2 (611 aa).

One can recognise a Urease domain in the interval 154–611 (GGIDSHIHFI…LPMAQRYFLF (458 aa)). H159, H161, and K242 together coordinate Ni(2+). An N6-carboxylysine modification is found at K242. H244 is a substrate binding site. H271 and H297 together coordinate Ni(2+). Residue H345 is the Proton donor of the active site. Ni(2+) is bound at residue D385. The segment at 411 to 434 (GHLAPDQSAKTEQSLDNIMLSPTD) is disordered. The span at 418-434 (SAKTEQSLDNIMLSPTD) shows a compositional bias: polar residues.

The protein belongs to the metallo-dependent hydrolases superfamily. Urease alpha subunit family. Heterotrimer of UreA (gamma), UreB (beta) and UreC (alpha) subunits. Three heterotrimers associate to form the active enzyme. It depends on Ni cation as a cofactor. Carboxylation allows a single lysine to coordinate two nickel ions.

The protein localises to the cytoplasm. It carries out the reaction urea + 2 H2O + H(+) = hydrogencarbonate + 2 NH4(+). The protein operates within nitrogen metabolism; urea degradation; CO(2) and NH(3) from urea (urease route): step 1/1. The chain is Urease subunit alpha 2 from Psychrobacter cryohalolentis (strain ATCC BAA-1226 / DSM 17306 / VKM B-2378 / K5).